Here is a 246-residue protein sequence, read N- to C-terminus: 3-deoxy-manno-octulosonate cytidylyltransferase (246 aa).

This sequence belongs to the KdsB family.

It is found in the cytoplasm. The enzyme catalyses 3-deoxy-alpha-D-manno-oct-2-ulosonate + CTP = CMP-3-deoxy-beta-D-manno-octulosonate + diphosphate. Its pathway is nucleotide-sugar biosynthesis; CMP-3-deoxy-D-manno-octulosonate biosynthesis; CMP-3-deoxy-D-manno-octulosonate from 3-deoxy-D-manno-octulosonate and CTP: step 1/1. The protein operates within bacterial outer membrane biogenesis; lipopolysaccharide biosynthesis. Functionally, activates KDO (a required 8-carbon sugar) for incorporation into bacterial lipopolysaccharide in Gram-negative bacteria. In Bradyrhizobium diazoefficiens (strain JCM 10833 / BCRC 13528 / IAM 13628 / NBRC 14792 / USDA 110), this protein is 3-deoxy-manno-octulosonate cytidylyltransferase.